We begin with the raw amino-acid sequence, 276 residues long: uncharacterized protein (276 aa).

Positions 1 to 29 are cleaved as a signal peptide; the sequence is MKSHVRSFKTYIRDEIIKKGGWVNAHAHA.

The protein belongs to the metallo-dependent hydrolases superfamily.

This is an uncharacterized protein from Haemophilus influenzae (strain ATCC 51907 / DSM 11121 / KW20 / Rd).